Here is a 124-residue protein sequence, read N- to C-terminus: Small ribosomal subunit protein uS12 (124 aa).

Residues 1-30 (MPTIQQLVRKGRQDKVAKTKTAALKGSPQR) form a disordered region. At Asp-89 the chain carries 3-methylthioaspartic acid. Positions 102–124 (ADTQGVKNRKQARSRYGAKKEKS) are disordered. The segment covering 108 to 118 (KNRKQARSRYG) has biased composition (basic residues).

It belongs to the universal ribosomal protein uS12 family. Part of the 30S ribosomal subunit. Contacts proteins S8 and S17. May interact with IF1 in the 30S initiation complex.

With S4 and S5 plays an important role in translational accuracy. In terms of biological role, interacts with and stabilizes bases of the 16S rRNA that are involved in tRNA selection in the A site and with the mRNA backbone. Located at the interface of the 30S and 50S subunits, it traverses the body of the 30S subunit contacting proteins on the other side and probably holding the rRNA structure together. The combined cluster of proteins S8, S12 and S17 appears to hold together the shoulder and platform of the 30S subunit. In Saccharopolyspora erythraea (strain ATCC 11635 / DSM 40517 / JCM 4748 / NBRC 13426 / NCIMB 8594 / NRRL 2338), this protein is Small ribosomal subunit protein uS12.